Reading from the N-terminus, the 430-residue chain is Cell division protein FtsZ (430 aa).

Residues 76 to 80 (GGGCN), 163 to 165 (GTG), Glu-194, Arg-198, and Asp-242 each bind GTP. Residues 374–418 (KEKPQAKTSSKPVLSGPPAGVETVPSTTTPEDPLGEIPMAPELDI) are disordered.

It belongs to the FtsZ family. In terms of assembly, homodimer. Polymerizes to form a dynamic ring structure in a strictly GTP-dependent manner. Interacts directly with several other division proteins.

It is found in the cytoplasm. Its function is as follows. Essential cell division protein that forms a contractile ring structure (Z ring) at the future cell division site. The regulation of the ring assembly controls the timing and the location of cell division. One of the functions of the FtsZ ring is to recruit other cell division proteins to the septum to produce a new cell wall between the dividing cells. Binds GTP and shows GTPase activity. This chain is Cell division protein FtsZ, found in Synechocystis sp. (strain ATCC 27184 / PCC 6803 / Kazusa).